Here is a 383-residue protein sequence, read N- to C-terminus: ATP phosphoribosyltransferase regulatory subunit (383 aa).

It belongs to the class-II aminoacyl-tRNA synthetase family. HisZ subfamily. In terms of assembly, heteromultimer composed of HisG and HisZ subunits.

Its subcellular location is the cytoplasm. It functions in the pathway amino-acid biosynthesis; L-histidine biosynthesis; L-histidine from 5-phospho-alpha-D-ribose 1-diphosphate: step 1/9. Functionally, required for the first step of histidine biosynthesis. May allow the feedback regulation of ATP phosphoribosyltransferase activity by histidine. This chain is ATP phosphoribosyltransferase regulatory subunit, found in Neisseria meningitidis serogroup C (strain 053442).